Here is an 825-residue protein sequence, read N- to C-terminus: Probable inorganic carbon transporter subunit DabA (825 aa).

Zn(2+) is bound by residues Cys334, Asp336, His521, and Cys536.

This sequence belongs to the inorganic carbon transporter (TC 9.A.2) DabA family. As to quaternary structure, forms a complex with DabB. The cofactor is Zn(2+).

It localises to the cell inner membrane. Functionally, part of an energy-coupled inorganic carbon pump. This chain is Probable inorganic carbon transporter subunit DabA, found in Acidithiobacillus ferrooxidans (strain ATCC 53993 / BNL-5-31) (Leptospirillum ferrooxidans (ATCC 53993)).